We begin with the raw amino-acid sequence, 251 residues long: Triosephosphate isomerase (251 aa).

9 to 11 (NWK) is a substrate binding site. Catalysis depends on His94, which acts as the Electrophile. The active-site Proton acceptor is Glu166. Substrate contacts are provided by residues Gly172, Ser211, and 232–233 (GG).

The protein belongs to the triosephosphate isomerase family. In terms of assembly, homodimer.

It is found in the cytoplasm. The enzyme catalyses D-glyceraldehyde 3-phosphate = dihydroxyacetone phosphate. It participates in carbohydrate biosynthesis; gluconeogenesis. It functions in the pathway carbohydrate degradation; glycolysis; D-glyceraldehyde 3-phosphate from glycerone phosphate: step 1/1. In terms of biological role, involved in the gluconeogenesis. Catalyzes stereospecifically the conversion of dihydroxyacetone phosphate (DHAP) to D-glyceraldehyde-3-phosphate (G3P). The chain is Triosephosphate isomerase from Xanthomonas campestris pv. campestris (strain 8004).